We begin with the raw amino-acid sequence, 309 residues long: Methyltransferase AacuQ (309 aa).

A methyltransferase domain region spans residues Asp-57–Cys-149.

Belongs to the methyltransferase superfamily.

Its pathway is secondary metabolite biosynthesis. Methyltransferase; part of the gene cluster that mediates the biosynthesis of the tetrahydroxanthone dimer secalonic acid D. The pathway begins with the synthesis of atrochrysone thioester by the polyketide synthase AacuL. The atrochrysone carboxyl ACP thioesterase AacuM then breaks the thioester bond and releases the atrochrysone carboxylic acid from AacuL. Atrochrysone carboxylic acid is decarboxylated by the decarboxylase AacuI, and oxidized by the anthrone oxygenase AacuG to yield emodin. Emodin is then reduced to emodin hydroquinone by a yet unidentified oxidoreductase. A-ring reduction by the short chain dehydrogenase AacuN, dehydration by the scytalone dehydratase-like protein AacuK and probable spontaneous re-oxidation, results in overall deoxygenation to chrysophanol. Baeyer-Villiger oxidation by the Baeyer-Villiger monooxygenase (BVMO) AacuH then yields monodictyphenone. Monodictyphenone is transformed into compounds with the tetrahydroxanthone skeleton via methylesterification by the methyltransferase AacuQ, followed by the action of the flavin-dependent monooxygenase AacuC, the isomerase AacuP, and the short chain dehydrogenase/reductase AacuF or AacuD. AacuF and AacuD should accept the same compound as a substrate but perform the ketoreduction with a different stereoselectivity, thus yielding blennolides B and A, respectively. In the final step of the biosynthesis, the cytochrome P450 monooxygenase AacuE accepts blennolide B and/or blennolide A to conduct the dimerization reaction to furnish the tetrahydroxanthone dimers, secalonic acids D, B, and F. The chain is Methyltransferase AacuQ from Aspergillus aculeatus (strain ATCC 16872 / CBS 172.66 / WB 5094).